Reading from the N-terminus, the 187-residue chain is Peptidyl-tRNA hydrolase (187 aa).

Residue tyrosine 16 coordinates tRNA. The Proton acceptor role is filled by histidine 21. Residues tyrosine 66, asparagine 68, and asparagine 114 each contribute to the tRNA site.

The protein belongs to the PTH family. As to quaternary structure, monomer.

It localises to the cytoplasm. It carries out the reaction an N-acyl-L-alpha-aminoacyl-tRNA + H2O = an N-acyl-L-amino acid + a tRNA + H(+). Functionally, hydrolyzes ribosome-free peptidyl-tRNAs (with 1 or more amino acids incorporated), which drop off the ribosome during protein synthesis, or as a result of ribosome stalling. In terms of biological role, catalyzes the release of premature peptidyl moieties from peptidyl-tRNA molecules trapped in stalled 50S ribosomal subunits, and thus maintains levels of free tRNAs and 50S ribosomes. The chain is Peptidyl-tRNA hydrolase from Malacoplasma penetrans (strain HF-2) (Mycoplasma penetrans).